The sequence spans 131 residues: UPF0102 protein YraN (131 aa).

Positions 1-19 (MATVPTRSGSPRQLTTKQT) are enriched in polar residues. The tract at residues 1-21 (MATVPTRSGSPRQLTTKQTGD) is disordered.

The protein belongs to the UPF0102 family.

In Escherichia coli O45:K1 (strain S88 / ExPEC), this protein is UPF0102 protein YraN.